The following is a 105-amino-acid chain: Small ribosomal subunit protein uS10 (105 aa).

It belongs to the universal ribosomal protein uS10 family. Part of the 30S ribosomal subunit.

Involved in the binding of tRNA to the ribosomes. This chain is Small ribosomal subunit protein uS10, found in Cyanothece sp. (strain PCC 7425 / ATCC 29141).